We begin with the raw amino-acid sequence, 181 residues long: Trafficking protein particle complex subunit 3 homolog (181 aa).

The S-palmitoyl cysteine moiety is linked to residue Cys70.

This sequence belongs to the TRAPP small subunits family. BET3 subfamily. In terms of assembly, homodimer. Part of the multisubunit TRAPP (transport protein particle) complex.

Its subcellular location is the golgi apparatus. It localises to the cis-Golgi network. The protein resides in the endoplasmic reticulum. Its function is as follows. May play a role in vesicular transport from endoplasmic reticulum to Golgi. Required for the systemic spread of the RNAi response. This Caenorhabditis briggsae protein is Trafficking protein particle complex subunit 3 homolog.